The sequence spans 72 residues: Rubredoxin in uptake hydrogenase operon (72 aa).

The Rubredoxin-like domain occupies 19-70 (DAVLECKICWHRYDPAVGDEVWQILAGTPFAALPAHWRCPQCDGDREQFMVV). 4 residues coordinate Fe cation: Cys24, Cys27, Cys57, and Cys60.

This sequence belongs to the rubredoxin family. Fe(3+) serves as cofactor.

Functionally, could be an electron transport intermediate in hydrogen oxidation. The chain is Rubredoxin in uptake hydrogenase operon (hupR) from Azotobacter chroococcum mcd 1.